The primary structure comprises 114 residues: Large ribosomal subunit protein uL22 (114 aa).

It belongs to the universal ribosomal protein uL22 family. In terms of assembly, part of the 50S ribosomal subunit.

Its function is as follows. This protein binds specifically to 23S rRNA; its binding is stimulated by other ribosomal proteins, e.g. L4, L17, and L20. It is important during the early stages of 50S assembly. It makes multiple contacts with different domains of the 23S rRNA in the assembled 50S subunit and ribosome. Functionally, the globular domain of the protein is located near the polypeptide exit tunnel on the outside of the subunit, while an extended beta-hairpin is found that lines the wall of the exit tunnel in the center of the 70S ribosome. This chain is Large ribosomal subunit protein uL22, found in Streptococcus thermophilus (strain CNRZ 1066).